We begin with the raw amino-acid sequence, 263 residues long: uncharacterized protein (263 aa).

31-38 (GPTGSGKT) contributes to the ATP binding site.

It belongs to the CbbQ/NirQ/NorQ/GpvN family.

This is an uncharacterized protein from Staphylococcus aureus (strain USA300).